Reading from the N-terminus, the 351-residue chain is Holliday junction branch migration complex subunit RuvB (351 aa).

A large ATPase domain (RuvB-L) region spans residues 1–182 (MNDRLITPDA…FGIVQRLEYY (182 aa)). Residues I21, R22, G63, K66, T67, T68, 129 to 131 (EDF), R172, Y182, and R219 each bind ATP. Position 67 (T67) interacts with Mg(2+). Positions 183 to 253 (NVADLSGIVK…VAHAAMELLN (71 aa)) are small ATPAse domain (RuvB-S). The segment at 256-351 (RNGFDEQDRR…QDAPPVGRER (96 aa)) is head domain (RuvB-H). Residues R292, R311, and R316 each contribute to the DNA site. The interval 328 to 351 (LNPPRQPDTSPDLFQDAPPVGRER) is disordered.

The protein belongs to the RuvB family. Homohexamer. Forms an RuvA(8)-RuvB(12)-Holliday junction (HJ) complex. HJ DNA is sandwiched between 2 RuvA tetramers; dsDNA enters through RuvA and exits via RuvB. An RuvB hexamer assembles on each DNA strand where it exits the tetramer. Each RuvB hexamer is contacted by two RuvA subunits (via domain III) on 2 adjacent RuvB subunits; this complex drives branch migration. In the full resolvosome a probable DNA-RuvA(4)-RuvB(12)-RuvC(2) complex forms which resolves the HJ.

It is found in the cytoplasm. It carries out the reaction ATP + H2O = ADP + phosphate + H(+). Functionally, the RuvA-RuvB-RuvC complex processes Holliday junction (HJ) DNA during genetic recombination and DNA repair, while the RuvA-RuvB complex plays an important role in the rescue of blocked DNA replication forks via replication fork reversal (RFR). RuvA specifically binds to HJ cruciform DNA, conferring on it an open structure. The RuvB hexamer acts as an ATP-dependent pump, pulling dsDNA into and through the RuvAB complex. RuvB forms 2 homohexamers on either side of HJ DNA bound by 1 or 2 RuvA tetramers; 4 subunits per hexamer contact DNA at a time. Coordinated motions by a converter formed by DNA-disengaged RuvB subunits stimulates ATP hydrolysis and nucleotide exchange. Immobilization of the converter enables RuvB to convert the ATP-contained energy into a lever motion, pulling 2 nucleotides of DNA out of the RuvA tetramer per ATP hydrolyzed, thus driving DNA branch migration. The RuvB motors rotate together with the DNA substrate, which together with the progressing nucleotide cycle form the mechanistic basis for DNA recombination by continuous HJ branch migration. Branch migration allows RuvC to scan DNA until it finds its consensus sequence, where it cleaves and resolves cruciform DNA. The protein is Holliday junction branch migration complex subunit RuvB of Alkalilimnicola ehrlichii (strain ATCC BAA-1101 / DSM 17681 / MLHE-1).